A 492-amino-acid polypeptide reads, in one-letter code: 2-succinylbenzoate--CoA ligase (492 aa).

The protein belongs to the ATP-dependent AMP-binding enzyme family. MenE subfamily.

It carries out the reaction 2-succinylbenzoate + ATP + CoA = 2-succinylbenzoyl-CoA + AMP + diphosphate. The protein operates within quinol/quinone metabolism; 1,4-dihydroxy-2-naphthoate biosynthesis; 1,4-dihydroxy-2-naphthoate from chorismate: step 5/7. It functions in the pathway quinol/quinone metabolism; menaquinone biosynthesis. In terms of biological role, converts 2-succinylbenzoate (OSB) to 2-succinylbenzoyl-CoA (OSB-CoA). This is 2-succinylbenzoate--CoA ligase from Staphylococcus aureus (strain bovine RF122 / ET3-1).